The following is a 569-amino-acid chain: Glutamate--tRNA ligase (569 aa).

The 'HIGH' region motif lies at 110 to 120; it reads PNPNGPPTLGS.

This sequence belongs to the class-I aminoacyl-tRNA synthetase family. Glutamate--tRNA ligase type 2 subfamily.

It is found in the cytoplasm. The catalysed reaction is tRNA(Glu) + L-glutamate + ATP = L-glutamyl-tRNA(Glu) + AMP + diphosphate. In terms of biological role, catalyzes the attachment of glutamate to tRNA(Glu) in a two-step reaction: glutamate is first activated by ATP to form Glu-AMP and then transferred to the acceptor end of tRNA(Glu). The sequence is that of Glutamate--tRNA ligase from Methanococcoides burtonii (strain DSM 6242 / NBRC 107633 / OCM 468 / ACE-M).